We begin with the raw amino-acid sequence, 645 residues long: Threonine--tRNA ligase (645 aa).

The region spanning 1–61 (MPVITLPDGS…SDDAKLSIIT (61 aa)) is the TGS domain. Residues 243–534 (DHRKLGKKLD…LIEDTEGAFP (292 aa)) are catalytic. Residues Cys-334, His-385, and His-511 each coordinate Zn(2+).

The protein belongs to the class-II aminoacyl-tRNA synthetase family. Homodimer. The cofactor is Zn(2+).

The protein localises to the cytoplasm. The catalysed reaction is tRNA(Thr) + L-threonine + ATP = L-threonyl-tRNA(Thr) + AMP + diphosphate + H(+). Its function is as follows. Catalyzes the attachment of threonine to tRNA(Thr) in a two-step reaction: L-threonine is first activated by ATP to form Thr-AMP and then transferred to the acceptor end of tRNA(Thr). Also edits incorrectly charged L-seryl-tRNA(Thr). The chain is Threonine--tRNA ligase from Marinomonas sp. (strain MWYL1).